The chain runs to 326 residues: Chitinase 12 (326 aa).

The signal sequence occupies residues 1-21; it reads MRALAVVAMVATAFLAAAVHA. A Chitin-binding type-1 domain is found at 22 to 62; that stretch reads EQCGSQAGGAVCPNCLCCSQFGWCGSTSDYCGAGCQSQCSA. Cystine bridges form between Cys24–Cys39, Cys33–Cys45, Cys36–Cys65, Cys38–Cys52, Cys56–Cys60, Cys102–Cys165, Cys179–Cys187, and Cys286–Cys318. Residue Glu147 is the Proton donor of the active site.

It belongs to the glycosyl hydrolase 19 family. Chitinase class I subfamily. As to expression, expressed in meristems and at lower levels in roots and sheaths.

The catalysed reaction is Random endo-hydrolysis of N-acetyl-beta-D-glucosaminide (1-&gt;4)-beta-linkages in chitin and chitodextrins.. In terms of biological role, hydrolyzes chitin and plays a role in defense against fungal pathogens containing chitin. Its overexpression confers enhanced resistance to sheath blight pathogen (R.solani). The chain is Chitinase 12 (Cht12) from Oryza sativa subsp. japonica (Rice).